Reading from the N-terminus, the 258-residue chain is UPF0246 protein Pnec_1068 (258 aa).

The protein belongs to the UPF0246 family.

The sequence is that of UPF0246 protein Pnec_1068 from Polynucleobacter necessarius subsp. necessarius (strain STIR1).